The chain runs to 125 residues: UPF0389 protein CG9231 (125 aa).

The chain crosses the membrane as a helical span at residues 69-88 (IRLANIMIALTAVGCAIMVY). A glycan (N-linked (GlcNAc...) asparagine) is linked at Asn112.

The protein belongs to the UPF0389 family.

Its subcellular location is the membrane. This Drosophila melanogaster (Fruit fly) protein is UPF0389 protein CG9231.